The sequence spans 172 residues: Iron-sulfur cluster assembly protein SufA (172 aa).

The signal sequence occupies residues 1–19 (MFINIFLFLFAATINISSS). The [4Fe-4S] cluster site is built by Cys96, Cys164, and Cys166.

Belongs to the HesB/IscA family. As to quaternary structure, homodimer.

The protein localises to the plastid. The protein resides in the apicoplast. Its pathway is cofactor biosynthesis; iron-sulfur cluster biosynthesis. Participates in the sulfur mobilization (SUF) pathway for iron-sulfur (Fe-S) cluster biogenesis. Involved in the pre-assembly of [4Fe-4S] clusters and their transfer to target proteins. In Plasmodium berghei (strain Anka), this protein is Iron-sulfur cluster assembly protein SufA.